A 386-amino-acid polypeptide reads, in one-letter code: Galactokinase (386 aa).

35-38 (EHTD) provides a ligand contact to substrate. ATP contacts are provided by residues Ser69 and 125 to 131 (GAGLSSS). The Mg(2+) site is built by Ser131 and Glu163. Asp175 functions as the Proton acceptor in the catalytic mechanism. Tyr224 is a substrate binding site.

Belongs to the GHMP kinase family. GalK subfamily.

It localises to the cytoplasm. The catalysed reaction is alpha-D-galactose + ATP = alpha-D-galactose 1-phosphate + ADP + H(+). Its pathway is carbohydrate metabolism; galactose metabolism. In terms of biological role, catalyzes the transfer of the gamma-phosphate of ATP to D-galactose to form alpha-D-galactose-1-phosphate (Gal-1-P). In Vibrio parahaemolyticus serotype O3:K6 (strain RIMD 2210633), this protein is Galactokinase.